Reading from the N-terminus, the 294-residue chain is 4-hydroxy-tetrahydrodipicolinate synthase (294 aa).

Pyruvate is bound at residue threonine 45. Residue tyrosine 133 is the Proton donor/acceptor of the active site. Lysine 162 (schiff-base intermediate with substrate) is an active-site residue. A pyruvate-binding site is contributed by isoleucine 204.

The protein belongs to the DapA family. As to quaternary structure, homotetramer; dimer of dimers.

It localises to the cytoplasm. The catalysed reaction is L-aspartate 4-semialdehyde + pyruvate = (2S,4S)-4-hydroxy-2,3,4,5-tetrahydrodipicolinate + H2O + H(+). It participates in amino-acid biosynthesis; L-lysine biosynthesis via DAP pathway; (S)-tetrahydrodipicolinate from L-aspartate: step 3/4. Functionally, catalyzes the condensation of (S)-aspartate-beta-semialdehyde [(S)-ASA] and pyruvate to 4-hydroxy-tetrahydrodipicolinate (HTPA). The chain is 4-hydroxy-tetrahydrodipicolinate synthase from Bartonella henselae (strain ATCC 49882 / DSM 28221 / CCUG 30454 / Houston 1) (Rochalimaea henselae).